Here is a 70-residue protein sequence, read N- to C-terminus: Sec-independent protein translocase protein TatA (70 aa).

A helical transmembrane segment spans residues 1-21; it reads MGIGVWELLLLFLIVLVVFGT. The interval 42–70 is disordered; that stretch reads MSENEDKPSEGGARTLEGEVVDKKEKDKV. A compositionally biased stretch (basic and acidic residues) spans 57–70; sequence LEGEVVDKKEKDKV.

Belongs to the TatA/E family. The Tat system comprises two distinct complexes: a TatABC complex, containing multiple copies of TatA, TatB and TatC subunits, and a separate TatA complex, containing only TatA subunits. Substrates initially bind to the TatABC complex, which probably triggers association of the separate TatA complex to form the active translocon.

It is found in the cell inner membrane. Part of the twin-arginine translocation (Tat) system that transports large folded proteins containing a characteristic twin-arginine motif in their signal peptide across membranes. TatA could form the protein-conducting channel of the Tat system. The chain is Sec-independent protein translocase protein TatA from Methylococcus capsulatus (strain ATCC 33009 / NCIMB 11132 / Bath).